A 1639-amino-acid chain; its full sequence is RIMS-binding protein 3A (1639 aa).

Disordered regions lie at residues 1-22 (MAKDSPSPLGASPKKPGCSSPA), 215-240 (GSPDPQAVHSLEEPLPQTSSGSCHAP), and 295-364 (SLDS…LTPS). A coiled-coil region spans residues 21-143 (PAAAVLENQR…ELQRQLAEEL (123 aa)). Residues 326-339 (SPPPSPLPPPPPPS) are compositionally biased toward pro residues. 2 coiled-coil regions span residues 409 to 442 (QADEKVKRLKVKRAELTGLARRLADRARKLQETN) and 480 to 619 (LAKD…AEEN). The interval 697–811 (CRPGHPPEQP…DRDTASEVDD (115 aa)) is disordered. Polar residues-rich tracts occupy residues 707 to 718 (WETSQMPESQVK) and 761 to 775 (SVPQVSETVPASQPL). A compositionally biased stretch (low complexity) spans 776-790 (SKKTSSQSNSSSEGS). The SH3 1 domain maps to 832–899 (PKLKIFMAQY…PSNFVEQIPD (68 aa)). Fibronectin type-III domains lie at 995–1083 (APMQ…TLLA) and 1088–1184 (PPLD…IPED). Disordered regions lie at residues 1251–1273 (PRRQSPVSNLGSEGECPSSGAGS) and 1292–1330 (QKSPQNHRPPSVSDQPGEKENCSQHMGTSKSPAPGFIHL). Over residues 1293 to 1305 (KSPQNHRPPSVSD) the composition is skewed to polar residues. 2 SH3 domains span residues 1452–1520 (TPAR…EMEV) and 1569–1636 (WTPK…HMSL).

It belongs to the RIMBP family. In terms of assembly, interacts with LRGUK (via guanylate kinase-like domain). Interacts (via C-terminus) with HOOK1 (via coiled-coil region).

Its subcellular location is the cytoplasm. It is found in the cytoskeleton. In terms of biological role, probable component of the manchette, a microtubule-based structure which plays a key role in sperm head morphogenesis during late stages of sperm development. The sequence is that of RIMS-binding protein 3A (RIMBP3) from Homo sapiens (Human).